The primary structure comprises 274 residues: Peroxiredoxin-4 (274 aa).

An N-terminal signal peptide occupies residues 1-40 (MEARSKLLDGTTASRRWTRKLVLLLPPLLLFLLRTESLQG). Positions 82–240 (AKISKPAPYW…TLRLVQAFQY (159 aa)) constitute a Thioredoxin domain. Cys127 serves as the catalytic Cysteine sulfenic acid (-SOH) intermediate.

The protein belongs to the peroxiredoxin family. AhpC/Prx1 subfamily. As to quaternary structure, homodimer; disulfide-linked, upon oxidation. 5 homodimers assemble to form a ring-like decamer. In terms of processing, the enzyme can be inactivated by further oxidation of the cysteine sulfenic acid (C(P)-SOH) to sulphinic acid (C(P)-SO2H) and sulphonic acid (C(P)-SO3H) instead of its condensation to a disulfide bond.

Its subcellular location is the cytoplasm. It localises to the endoplasmic reticulum. It carries out the reaction a hydroperoxide + [thioredoxin]-dithiol = an alcohol + [thioredoxin]-disulfide + H2O. In terms of biological role, thiol-specific peroxidase that catalyzes the reduction of hydrogen peroxide and organic hydroperoxides to water and alcohols, respectively. Plays a role in cell protection against oxidative stress by detoxifying peroxides and as sensor of hydrogen peroxide-mediated signaling events. Regulates the activation of NF-kappa-B in the cytosol by a modulation of I-kappa-B-alpha phosphorylation. This Mus musculus (Mouse) protein is Peroxiredoxin-4 (Prdx4).